Reading from the N-terminus, the 873-residue chain is Bifunctional uridylyltransferase/uridylyl-removing enzyme (873 aa).

A uridylyltransferase region spans residues 1-332 (MPYQCPITFN…NGGQTQEAEI (332 aa)). Positions 333–692 (LDNDFQRRGS…ISKKATRGGT (360 aa)) are uridylyl-removing. The HD domain occupies 451–573 (VDEHSIRLLK…VRDEESLELL (123 aa)). ACT domains lie at 693-777 (EVFV…RTPR) and 800-873 (LMEL…ELAP).

The protein belongs to the GlnD family. Mg(2+) is required as a cofactor.

The enzyme catalyses [protein-PII]-L-tyrosine + UTP = [protein-PII]-uridylyl-L-tyrosine + diphosphate. It carries out the reaction [protein-PII]-uridylyl-L-tyrosine + H2O = [protein-PII]-L-tyrosine + UMP + H(+). Its activity is regulated as follows. Uridylyltransferase (UTase) activity is inhibited by glutamine, while glutamine activates uridylyl-removing (UR) activity. Modifies, by uridylylation and deuridylylation, the PII regulatory proteins (GlnB and homologs), in response to the nitrogen status of the cell that GlnD senses through the glutamine level. Under low glutamine levels, catalyzes the conversion of the PII proteins and UTP to PII-UMP and PPi, while under higher glutamine levels, GlnD hydrolyzes PII-UMP to PII and UMP (deuridylylation). Thus, controls uridylylation state and activity of the PII proteins, and plays an important role in the regulation of nitrogen assimilation and metabolism. The sequence is that of Bifunctional uridylyltransferase/uridylyl-removing enzyme from Vibrio atlanticus (strain LGP32) (Vibrio splendidus (strain Mel32)).